Reading from the N-terminus, the 312-residue chain is DNA-directed RNA polymerase subunit alpha (312 aa).

Positions 1-229 (MLQYQIDRIE…ELFQPLATVT (229 aa)) are alpha N-terminal domain (alpha-NTD). Residues 239–312 (EPSAEAQIPL…ISIPQSRTSA (74 aa)) are alpha C-terminal domain (alpha-CTD).

This sequence belongs to the RNA polymerase alpha chain family. As to quaternary structure, in cyanobacteria the RNAP catalytic core is composed of 2 alpha, 1 beta, 1 beta', 1 gamma and 1 omega subunit. When a sigma factor is associated with the core the holoenzyme is formed, which can initiate transcription.

The enzyme catalyses RNA(n) + a ribonucleoside 5'-triphosphate = RNA(n+1) + diphosphate. DNA-dependent RNA polymerase catalyzes the transcription of DNA into RNA using the four ribonucleoside triphosphates as substrates. This Synechococcus sp. (strain CC9605) protein is DNA-directed RNA polymerase subunit alpha.